The following is a 417-amino-acid chain: Phosphoglycerate kinase (417 aa).

Positions 23, 24, 25, 26, 39, 40, 63, 64, 66, 67, 122, 123, 170, and 171 each coordinate (2R)-3-phosphoglycerate. G214 is an ADP binding site. Position 214 (G214) interacts with CDP. AMP is bound by residues A215 and K216. A215 is an ATP binding site. Position 215 (A215) interacts with Mg(2+). D219 is a binding site for CDP. D219 is a Mg(2+) binding site. K220 lines the AMP pocket. Residue K220 coordinates ATP. G238 provides a ligand contact to ADP. G238 is a CDP binding site. AMP is bound by residues G239 and G313. The ATP site is built by G239 and G313. The CDP site is built by G338, A340, and F343. An ADP-binding site is contributed by F343. AMP is bound at residue E344. 3 residues coordinate ATP: E344, D375, and T376. Mg(2+) is bound at residue D375.

The protein belongs to the phosphoglycerate kinase family. Monomer. Requires Mg(2+) as cofactor.

The protein resides in the cytoplasm. The protein localises to the mitochondrion. The catalysed reaction is (2R)-3-phosphoglycerate + ATP = (2R)-3-phospho-glyceroyl phosphate + ADP. It functions in the pathway carbohydrate degradation; glycolysis; pyruvate from D-glyceraldehyde 3-phosphate: step 2/5. Catalyzes one of the two ATP producing reactions in the glycolytic pathway via the reversible conversion of 1,3-diphosphoglycerate to 3-phosphoglycerate. Both L- and D- forms of purine and pyrimidine nucleotides can be used as substrates, but the activity is much lower on pyrimidines. Negatively regulates the biosynthesis of acetyl-CoA from pyruvate in the mitochondrion. The chain is Phosphoglycerate kinase (pgk1) from Hypocrea rufa (Trichoderma viride).